A 760-amino-acid polypeptide reads, in one-letter code: MNRKNVTRTITAIAVVVLLGWSFFYFSDDTRGYKPVDTSVAITQINGDNVKSAQIDDREQQLRLILKKGNNETDGSEKVITKYPTGYAVDLFNALSAKNAKVSTVVNQGSILGELLVYVLPLLLLVGLFVMFSRMQGGARMGFGFGKSRAKQLSKDMPKTTFADVAGVDEAVEELYEIKDFLQNPSRYQALGAKIPKGVLLYGPPGTGKTLLARAVAGEAGVPFFTISGSDFVEMFVGVGASRVRDLFEQAKQNSPCIIFVDEIDAVGRQRGAGLGGGHDEREQTLNQLLVEMDGFGDRAGVILIAATNRPDILDPALLRPGRFDRQIPVSNPDLAGRRAVLRVHSKGKPMAADADLDGLAKRTVGMTGADLANVINEAALLTARENGTVITGPALEEAVDRVIGGPRRKGRIISEQEKKITAYHEGGHTLAAWAMPDIEPIYKVTILARGRTGGHAVAVPEEDKGLRTRSEMIAQLVFAMGGRAAEELVFREPTTGAVSDIEQATKIARSMVTEFGMSSKLGAVKYGSEHGDPFLGRTMGTQPDYSHEVAREIDEEVRKLIEAAHTEAWEILTEYRDVLDTLAGELLEKETLHRPELESIFADVEKRPRLTMFDDFGGRIPSDKPPIKTPGELAIERGEPWPQPVPEPAFKAAIAQATQAAEAARSDAGQTGHGANGSPAGTHRSGDRQYGSTQPDYGAPAGWHAPGWPPRSSHRPSYSGEPAPTYPGQPYPTGQADPGSDESSAEQDDEVSRTKPAHG.

Residues 1–5 are Cytoplasmic-facing; that stretch reads MNRKN. Residues 6–26 traverse the membrane as a helical segment; it reads VTRTITAIAVVVLLGWSFFYF. At 27–110 the chain is on the extracellular side; it reads SDDTRGYKPV…KVSTVVNQGS (84 aa). The helical transmembrane segment at 111–131 threads the bilayer; it reads ILGELLVYVLPLLLLVGLFVM. The Cytoplasmic segment spans residues 132-760; sequence FSRMQGGARM…EVSRTKPAHG (629 aa). Residue 203-210 participates in ATP binding; that stretch reads GPPGTGKT. His-425 contacts Zn(2+). The active site involves Glu-426. Zn(2+) is bound by residues His-429 and Asp-501. Residues 616 to 760 are disordered; the sequence is DFGGRIPSDK…EVSRTKPAHG (145 aa). Residues 650-669 are compositionally biased toward low complexity; the sequence is AFKAAIAQATQAAEAARSDA. Positions 740 to 750 are enriched in acidic residues; the sequence is GSDESSAEQDD.

It in the central section; belongs to the AAA ATPase family. In the C-terminal section; belongs to the peptidase M41 family. In terms of assembly, homohexamer. It depends on Zn(2+) as a cofactor.

It localises to the cell membrane. Its function is as follows. Acts as a processive, ATP-dependent zinc metallopeptidase for both cytoplasmic and membrane proteins. Plays a role in the quality control of integral membrane proteins. This chain is ATP-dependent zinc metalloprotease FtsH, found in Mycobacterium bovis (strain ATCC BAA-935 / AF2122/97).